Reading from the N-terminus, the 212-residue chain is Ribosomal RNA small subunit methyltransferase G (212 aa).

Residues Gly73, 127 to 128, and Arg143 each bind S-adenosyl-L-methionine; that span reads IE.

Belongs to the methyltransferase superfamily. RNA methyltransferase RsmG family.

Its subcellular location is the cytoplasm. The enzyme catalyses guanosine(527) in 16S rRNA + S-adenosyl-L-methionine = N(7)-methylguanosine(527) in 16S rRNA + S-adenosyl-L-homocysteine. Functionally, specifically methylates the N7 position of guanine in position 527 of 16S rRNA. The chain is Ribosomal RNA small subunit methyltransferase G from Methylobacterium nodulans (strain LMG 21967 / CNCM I-2342 / ORS 2060).